The chain runs to 751 residues: Catalase-peroxidase (751 aa).

The first 12 residues, 1–12 (MSNETKCPFSHA), serve as a signal peptide directing secretion. A cross-link (tryptophyl-tyrosyl-methioninium (Trp-Tyr) (with M-267)) is located at residues 91-241 (WHSAGTYRIG…LAAVQMGLIY (151 aa)). Residue H92 is the Proton acceptor of the active site. Residues 241 to 267 (YVNPEGPDGNPDPLAAAHDIRESFGRM) constitute a cross-link (tryptophyl-tyrosyl-methioninium (Tyr-Met) (with W-91)). H282 is a binding site for heme b.

This sequence belongs to the peroxidase family. Peroxidase/catalase subfamily. In terms of assembly, homodimer or homotetramer. Requires heme b as cofactor. Post-translationally, formation of the three residue Trp-Tyr-Met cross-link is important for the catalase, but not the peroxidase activity of the enzyme.

The enzyme catalyses H2O2 + AH2 = A + 2 H2O. It carries out the reaction 2 H2O2 = O2 + 2 H2O. Bifunctional enzyme with both catalase and broad-spectrum peroxidase activity. This is Catalase-peroxidase from Cupriavidus necator (strain ATCC 17699 / DSM 428 / KCTC 22496 / NCIMB 10442 / H16 / Stanier 337) (Ralstonia eutropha).